The primary structure comprises 931 residues: MAASTGLSTVLKEIVQVCREVESHLATESHLDSGEGAPGKNTFPIGLEGPRKQLANAAAQLSQLVTDPREYLEQLSANHGSIAYTDLANRASVPESQLKSVLRMTAAHGFLAEVTPLEISHSPTSALIATNPSFYDWARWLTNYSVPSAYHFADATQKWGRTEVKNETAFNIAMNVEVPFFGYLKENAKMNSMFSSYMRNVASSEATSFKHMISGFDWGGLTPGSKVIDVGGSGGHGSRALASAFPGLNFVVQDLPDTIENAKAALNTDESKLHADRVRFMSHDFFTPQPVVDGDIYFLRMIIHDWPDETAITILAHLRDALKKPGARIVIMDTILPQPGTVSLLQERQLRVRDLTMMQVFNAKEREYDTWKALVEKVGLRIIHVEQPEGSNMGLLELGLADATDLKAGGNARLVFNGNMKTPSVNLNINGASTINEFAHGSTPETFAVNGIHTTDKARPNGDTTHSGQASIPNGVSARISTRPMYARDVLPVLIIGAGISGLCLAQYLHKHAIPFVVFERDPSSEHRPQGYRLKLEADAAAALRESLTAEVYSAFEASCAESAIGETDFDPISGACIKSRAGGGLAGAQGLRASYTVDRTVFRRILMTGISDKIYFGREITRYDICEDNVQSYVVATFKDGATAEGRFLVGADGTRSAIRKQLVPEHKFLDTGATCIYGKTVMTPELLARYPARALRWMTVVADRAPLIQSILIGESPLTLLSEPIRFSRDEPTASLPEDYVYWVLIGRRELFTDATNTSASSTGHGVNSDKAYNTESAQASAAQSLALTEEWHPSLRSLFELQDVSQASTMRVVSAPPKLPVWPSNSCVTLLGDAVHAMSPCGGVGANVALRDAAELGKVFASTAASNEEDAIQSVGGKASDQHDMAQQIASFEGELRKRAFGGIMRSFVGSKAMFGQRTFEELDVAEL.

Residues 1–463 (MAASTGLSTV…TTDKARPNGD (463 aa)) form an O-methyltransferase region. Asp254 contacts S-adenosyl-L-methionine. His304 functions as the Proton acceptor in the catalytic mechanism. Positions 455-474 (TDKARPNGDTTHSGQASIPN) are disordered. Polar residues predominate over residues 462–474 (GDTTHSGQASIPN). An FAD-dependent monooxygenase region spans residues 464–931 (TTHSGQASIP…TFEELDVAEL (468 aa)). The FAD site is built by Glu520, Arg604, Asp836, and Ala849.

The protein in the C-terminal section; belongs to the paxM FAD-dependent monooxygenase family. It in the N-terminal section; belongs to the class I-like SAM-binding methyltransferase superfamily. Cation-independent O-methyltransferase family. COMT subfamily.

The enzyme catalyses nor-toralactone + S-adenosyl-L-methionine = toralactone + S-adenosyl-L-homocysteine + H(+). The catalysed reaction is toralactone + NADH + O2 + H(+) = 1-(3,4,5-trihydroxy-7-methoxynaphthalen-2-yl)propan-2-one + CO2 + NAD(+). The protein operates within secondary metabolite biosynthesis. Dual O-methyltransferase/FAD-dependent monooxygenase; part of the gene cluster that mediates the biosynthesis of elsinochrome C, a perelyenequinone phytotoxin structurally similar to cercosporin. The first step of elsinochrome C biosynthesis is performed by the polyketide synthase elcA which catalyzes the formation of nor-toralactone. The starter unit acyltransferase (SAT) domain of elcA initiates polyketide extension by the selective utilization of acetyl-CoA, which is elongated to the heptaketide in the beta-ketoacyl synthase (KS) domain by successive condensations with six malonyl units introduced by the malonyl acyltransferase (MAT) domain. The product template (PT) domain catalyzes C4-C9 and C2-C11 aldol cyclizations and dehydrations to a trihydroxynaphthalene, which is thought to be delivered to the thioesterase (TE) domain for product release. The bifunctional enzyme elcB then methylates nor-toralactone to toralactone before conducting an unusual oxidative aromatic ring opening. The next step in perylenequinone biosynthesis is an O-methylation at the nascent OH-6 of the elcB product performed by the O-methyltransferase elcD. The oxidative coupling of the two monomeric naphthol units in perylenequinone biosynthesis is catalyzed by the FAD-dependent monooxygenase elcE and the multicopper oxidase elcG. ElcG might catalyze the first intermolecular coupling in a regio- and stereo-selective manner via a phenol radical coupling mechanism and the elcE could forge the second C-C bond intramolecularly via a hydride transfer mechanism. The fasciclin domain-containing protein elcF might also play a role duting this step. The last piece of the puzzle in the biosynthesis of elsinochrome C is the additional annulation by enolate coupling to afford the dihydrobenzo(ghi)perylenequinone system, catalyzed by the FAD-dependent monooxygenase elcH. In Phaeosphaeria nodorum (strain SN15 / ATCC MYA-4574 / FGSC 10173) (Glume blotch fungus), this protein is Dual O-methyltransferase/FAD-dependent monooxygenase elcB.